The following is a 170-amino-acid chain: Small ribosomal subunit protein bS18c (170 aa).

The tract at residues 1–61 (MYTSKQPFLK…RRPRIGPGDR (61 aa)) is disordered. Residues 13–26 (QPFSKSKQTFNKSK) show a composition bias toward polar residues. Positions 27–55 (QPFRKSKQTFRKFKQPFRKSKQPFRRRPR) are enriched in basic residues.

The protein belongs to the bacterial ribosomal protein bS18 family. Part of the 30S ribosomal subunit.

Its subcellular location is the plastid. The protein localises to the chloroplast. The chain is Small ribosomal subunit protein bS18c from Hordeum vulgare (Barley).